Here is a 162-residue protein sequence, read N- to C-terminus: Peroxiredoxin-2C (162 aa).

One can recognise a Thioredoxin domain in the interval 4–162 (ITVGDVVPDG…SSAEDILKAL (159 aa)). Cysteine 51 functions as the Cysteine sulfenic acid (-SOH) intermediate in the catalytic mechanism.

It belongs to the peroxiredoxin family. Prx5 subfamily. Monomer. In terms of tissue distribution, highly expressed in buds and flowers. Slightly expressed in green tissues. Also detected in pollen.

It is found in the cytoplasm. The catalysed reaction is [glutaredoxin]-dithiol + a hydroperoxide = [glutaredoxin]-disulfide + an alcohol + H2O. In terms of biological role, thiol-specific peroxidase that catalyzes the reduction of hydrogen peroxide and organic hydroperoxides to water and alcohols, respectively. Plays a role in cell protection against oxidative stress by detoxifying peroxides and as sensor of hydrogen peroxide-mediated signaling events. This chain is Peroxiredoxin-2C (PRXIIC), found in Arabidopsis thaliana (Mouse-ear cress).